The primary structure comprises 496 residues: Versicolorin B desaturase stcL (496 aa).

A helical transmembrane segment spans residues 3–23 (FLSLPILTALGAVVYVLFQLV). Cys440 serves as a coordination point for heme.

It belongs to the cytochrome P450 family. Heme serves as cofactor.

The protein resides in the membrane. The enzyme catalyses versicolorin B + NADPH + O2 + H(+) = versicolorin A + NADP(+) + 2 H2O. It participates in mycotoxin biosynthesis; sterigmatocystin biosynthesis. Its function is as follows. Cytochrome P450 monooxygenase; part of the gene cluster that mediates the biosynthesis of sterigmatocystin (ST), a polyketide-derived furanocoumarin which is part of the most toxic and carcinogenic compounds among the known mycotoxins. The first step in the biosynthesis of sterigmatocystin is the production of hexanoate by the fatty acid synthase (FAS) units stcJ and stcK. The polyketide backbone is assembled by the non-reducing polyketide synthase stcA by condensation of the starter hexanoyl-CoA and 7 malonyl-CoA extender units followed by cyclization and release of norsolorinic acid. Norsolorinic acid is the first stable intermediate in the biosynthesis of sterigmatocystin and is converted into averantin (AVN) by the ketoreductase stcE which reduces the hexanoate ketone to an alcohol. Averantin is then oxidized into 5'-hydroxyaverantin (HAVN) by the cytochrome P450 monooxygenase stcF. 5'-hydroxyaverantin is further converted to 5'-oxyaverantin (OAVN) by the 5'-hydroxyaverantin dehydrogenase stcG. The next step is the conversion of OAVN into averufin (AVF) which is catalyzed by a yet to be identified enzyme. The cytochrome P450 monooxygenase stcB and the flavin-binding monooxygenase stcW are both required for the conversion of averufin to 1-hydroxyversicolorone. The esterase stcI probably catalyzes the formation of versiconal hemiacetal acetate from 1-hydroxyversicolorone. The oxydoreductase stcN then probably catalyzes the biosynthetic step from versiconal to versicolorin B (VERB). The next step is performed by the versicolorin B desaturase stcL to produce versicolorin A (VERA). The ketoreductase stcU and the cytochrome P450 monooxygenase stcS are involved in the conversion of versicolorin A to demethylsterigmatocystin. The Baeyer-Villiger oxidas stcQ and the reductase stcR might be involved in the biosynthetic step from versicolorin A to demethylsterigmatocystin. The final step in the biosynthesis of sterigmatocystin is the methylation of demethylsterigmatocystin catalyzed by the methyltransferase stcP. The sequence is that of Versicolorin B desaturase stcL from Emericella nidulans (strain FGSC A4 / ATCC 38163 / CBS 112.46 / NRRL 194 / M139) (Aspergillus nidulans).